A 187-amino-acid polypeptide reads, in one-letter code: UPF0301 protein LPC_2717 (187 aa).

This sequence belongs to the UPF0301 (AlgH) family.

This Legionella pneumophila (strain Corby) protein is UPF0301 protein LPC_2717.